We begin with the raw amino-acid sequence, 386 residues long: Chaperone protein DnaJ (386 aa).

The J domain maps to 6–71 (DYYEILGVDR…QKRARYDQFG (66 aa)). The CR-type zinc finger occupies 144-226 (GTEKEVTVSR…CGGKGRVRKH (83 aa)). The Zn(2+) site is built by C157, C160, C174, C177, C200, C203, C214, and C217. CXXCXGXG motif repeat units follow at residues 157–164 (CPTCSGSG), 174–181 (CRQCNGTG), 200–207 (CDVCHGEG), and 214–221 (CETCGGKG).

It belongs to the DnaJ family. As to quaternary structure, homodimer. The cofactor is Zn(2+).

It is found in the cytoplasm. Its function is as follows. Participates actively in the response to hyperosmotic and heat shock by preventing the aggregation of stress-denatured proteins and by disaggregating proteins, also in an autonomous, DnaK-independent fashion. Unfolded proteins bind initially to DnaJ; upon interaction with the DnaJ-bound protein, DnaK hydrolyzes its bound ATP, resulting in the formation of a stable complex. GrpE releases ADP from DnaK; ATP binding to DnaK triggers the release of the substrate protein, thus completing the reaction cycle. Several rounds of ATP-dependent interactions between DnaJ, DnaK and GrpE are required for fully efficient folding. Also involved, together with DnaK and GrpE, in the DNA replication of plasmids through activation of initiation proteins. The sequence is that of Chaperone protein DnaJ from Acetivibrio thermocellus (strain ATCC 27405 / DSM 1237 / JCM 9322 / NBRC 103400 / NCIMB 10682 / NRRL B-4536 / VPI 7372) (Clostridium thermocellum).